The chain runs to 398 residues: Transposase for insertion sequence element ISRM5 (398 aa).

This sequence belongs to the transposase mutator family.

Required for the transposition of the insertion element. This is Transposase for insertion sequence element ISRM5 from Rhizobium meliloti (strain 1021) (Ensifer meliloti).